A 468-amino-acid polypeptide reads, in one-letter code: uncharacterized protein (468 aa).

The region spanning 3–61 is the TRAM domain; sequence TFANGMTLDVTVDALAPGGKAVCRHEGRVIFVDRGLPGQQLHVRLTTVRKRFAEAECLA. [4Fe-4S] cluster is bound by residues cysteine 74, cysteine 80, cysteine 83, and cysteine 162. Residues glutamine 288, tyrosine 317, glutamate 338, and aspartate 389 each coordinate S-adenosyl-L-methionine. The active-site Nucleophile is cysteine 416.

Belongs to the class I-like SAM-binding methyltransferase superfamily. RNA M5U methyltransferase family.

This is an uncharacterized protein from Nitratidesulfovibrio vulgaris (strain ATCC 29579 / DSM 644 / CCUG 34227 / NCIMB 8303 / VKM B-1760 / Hildenborough) (Desulfovibrio vulgaris).